Reading from the N-terminus, the 217-residue chain is Large ribosomal subunit protein uL1 (217 aa).

Belongs to the universal ribosomal protein uL1 family. In terms of assembly, component of the large ribosomal subunit.

The protein resides in the cytoplasm. Functionally, component of the large ribosomal subunit. The ribosome is a large ribonucleoprotein complex responsible for the synthesis of proteins in the cell. In Xenopus laevis (African clawed frog), this protein is Large ribosomal subunit protein uL1 (rpl10a).